The chain runs to 405 residues: Beta-citrylglutamate synthase B (405 aa).

In terms of domain architecture, ATP-grasp spans 115–300 (FQELAGHGVP…VAGIVADFVL (186 aa)). ATP-binding positions include Lys154, 189–199 (QEYVKESHGRD), and Arg215. Mg(2+) contacts are provided by Asp260, Glu273, and Asn275. Mn(2+) is bound by residues Asp260, Glu273, and Asn275. Residues 359-387 (AMSTMSTSSTSSESEADLTETGPTPVGAN) form a disordered region. Over residues 360 to 371 (MSTMSTSSTSSE) the composition is skewed to low complexity.

It belongs to the RimK family. It depends on Mg(2+) as a cofactor. Requires Mn(2+) as cofactor.

The protein resides in the cytoplasm. The catalysed reaction is citrate + L-glutamate + ATP = beta-citrylglutamate + ADP + phosphate + H(+). It catalyses the reaction N-acetyl-L-aspartate + L-glutamate + ATP = N-acetyl-L-aspartyl-L-glutamate + ADP + phosphate + H(+). In terms of biological role, catalyzes the synthesis of beta-citryl-L-glutamate and N-acetyl-L-aspartyl-L-glutamate. Beta-citryl-L-glutamate is synthesized more efficiently than N-acetyl-L-aspartyl-L-glutamate. The protein is Beta-citrylglutamate synthase B (rimklb) of Danio rerio (Zebrafish).